We begin with the raw amino-acid sequence, 137 residues long: Acidic phospholipase A2 beta-bungarotoxin A6 chain (137 aa).

Residues 1 to 9 (AVCVSLLGA) form the signal peptide. Positions 10–17 (ANIPPQHL) are excised as a propeptide. Cystine bridges form between C44-C136, C46-C62, C61-C117, C68-C110, C78-C103, and C96-C108. Y45, G47, and G49 together coordinate Ca(2+). H65 is an active-site residue. D66 serves as a coordination point for Ca(2+). The active site involves D111.

The protein belongs to the phospholipase A2 family. Group I subfamily. D49 sub-subfamily. In terms of assembly, heterodimer; disulfide-linked. The A chains have phospholipase A2 activity and the B chains show homology with the basic protease inhibitors. Requires Ca(2+) as cofactor. In terms of tissue distribution, expressed by the venom gland.

The protein resides in the secreted. It carries out the reaction a 1,2-diacyl-sn-glycero-3-phosphocholine + H2O = a 1-acyl-sn-glycero-3-phosphocholine + a fatty acid + H(+). Functionally, snake venom phospholipase A2 (PLA2) that inhibits neuromuscular transmission by blocking acetylcholine release from the nerve termini. PLA2 catalyzes the calcium-dependent hydrolysis of the 2-acyl groups in 3-sn-phosphoglycerides. The sequence is that of Acidic phospholipase A2 beta-bungarotoxin A6 chain from Bungarus multicinctus (Many-banded krait).